The primary structure comprises 262 residues: 2-keto-4-pentenoate hydratase 2 (262 aa).

Belongs to the hydratase/decarboxylase family. MhpD subfamily. It depends on a divalent metal cation as a cofactor.

It catalyses the reaction (S)-4-hydroxy-2-oxopentanoate = (2Z)-2-hydroxypenta-2,4-dienoate + H2O. It functions in the pathway aromatic compound metabolism; 3-phenylpropanoate degradation. Catalyzes the conversion of 2-hydroxypentadienoic acid (enolic form of 2-oxopent-4-enoate) to 4-hydroxy-2-ketopentanoic acid. The sequence is that of 2-keto-4-pentenoate hydratase 2 from Dechloromonas aromatica (strain RCB).